A 303-amino-acid polypeptide reads, in one-letter code: MTAILQMRNVRKLYGDHVVVDNLDLEVQPGQCFGLLGPNGAGKTTTLRMLLGLTTPASGTLMLCGEPIPQRAPQARMRVGVVPQFDNLDPDFSVIENLRIFGRYFGLSSAQIAERVPKLLEFARLESRADAQVRDLSGGMRRRLTVARALINDPDLLIMDEPTTGLDPQARHLIWERLKSLLSAGKTILLTTHFMEEAERLCNHLCVIDAGRKIAEGKPHELIDSEIGCDVVEVYGDELEPLRDTLTPLAERTEMRGETLFFYVREPAPLLAALHGKGGVRYLHRPANLEDVFLKLTGREMRD.

Positions 5–235 constitute an ABC transporter domain; the sequence is LQMRNVRKLY…EIGCDVVEVY (231 aa). 37–44 lines the ATP pocket; it reads GPNGAGKT.

The protein belongs to the ABC transporter superfamily. Lipooligosaccharide exporter (TC 3.A.1.102) family. As to quaternary structure, the complex is composed of two ATP-binding proteins (NodI) and two transmembrane proteins (NodJ).

It localises to the cell inner membrane. In terms of biological role, part of the ABC transporter complex NodIJ involved in the export of the nodulation factors (Nod factors), the bacterial signal molecules that induce symbiosis and subsequent nodulation induction. Nod factors are LCO (lipo-chitin oligosaccharide), a modified beta-1,4-linked N-acetylglucosamine oligosaccharide. This subunit is responsible for energy coupling to the transport system. This chain is Nod factor export ATP-binding protein I, found in Cupriavidus metallidurans (strain ATCC 43123 / DSM 2839 / NBRC 102507 / CH34) (Ralstonia metallidurans).